A 1138-amino-acid polypeptide reads, in one-letter code: Transmembrane channel-like protein 3 (1138 aa).

Over residues 1–15 (MEAAPGTAAAAAKPA) the composition is skewed to low complexity. 2 disordered regions span residues 1 to 20 (MEAAPGTAAAAAKPAKSCKK) and 29 to 54 (NIYTYQEPPHSNSDEDISEEKADSQD). The Cytoplasmic portion of the chain corresponds to 1–155 (MEAAPGTAAA…VASYFIFLRW (155 aa)). A helical transmembrane segment spans residues 156-176 (LFGINIVLTIMTGAFVVLPEL). The Extracellular segment spans residues 177–202 (LAGAPFGSTVSKTIRQEDLKTAQDLD). Residues 203 to 223 (TIWSLGGYLQYSVLFYGYYGS) form a helical membrane-spanning segment. At 224–233 (DRKIGKAGYR) the chain is on the cytoplasmic side. The chain crosses the membrane as a helical span at residues 234 to 254 (LPLAYFLVGMAVFAYSFIILL). At 255–327 (KKMAKNSRMS…KNLAVTISLR (73 aa)) the chain is on the extracellular side. An N-linked (GlcNAc...) asparagine glycan is attached at Asn-272. A helical membrane pass occupies residues 328–348 (IIANILVLLSLTGSIYIIYFV). The Cytoplasmic portion of the chain corresponds to 349 to 369 (VDRSQKLENNKRELTLWEKNE). The helical transmembrane segment at 370-390 (VSVVVSLITMIAPSAFELVAA) threads the bilayer. At 391–401 (LEMYHPRTTLR) the chain is on the extracellular side. Residues 402-422 (FQLARVLVLYLGNLYSLIIAL) form a helical membrane-spanning segment. Residues 423-508 (LDKVNSMSVT…CWETYVGQEM (86 aa)) lie on the Cytoplasmic side of the membrane. Residues 509 to 529 (LKLSIIDMIFTVASILLIDFF) form a helical membrane-spanning segment. The Extracellular portion of the chain corresponds to 530–569 (RGLCVRYLSDCWCWDLESKFPEYGEFKIAENVLHLVYNQG). A helical transmembrane segment spans residues 570-590 (MIWMGAFFSPCLPAFNVLKLI). The Cytoplasmic segment spans residues 591 to 618 (GLMYLRSWAVLTCNVPHQQVFRASRSNN). Residues 619-639 (FYLAMLLFMLFLCMLPTIFAI) traverse the membrane as a helical segment. The Extracellular segment spans residues 640 to 676 (ARYKPSLSCGPFSGQEKIYDIVSETIQNDFPAWFNSV). Residues 677–697 (IAYISSPVVVLPALLLLFMLI) traverse the membrane as a helical segment. Residues 698-1138 (YYLQSIARSL…EPNELVCSNV (441 aa)) lie on the Cytoplasmic side of the membrane. A compositionally biased stretch (polar residues) spans 753–763 (NSEGTRFQSLD). Disordered regions lie at residues 753 to 859 (NSEG…RYPS), 973 to 1005 (SPHPSEDEEDEEALGRHYVKRSHRPRSLSDLRP), and 1065 to 1095 (PKTKHMLEQSLTESDSVSIESSSDPQNSSND). A compositionally biased stretch (basic and acidic residues) spans 764–773 (GSDKRPDKDG). Polar residues-rich tracts occupy residues 777 to 795 (SQESSVRASTPRKNGSVLN) and 804 to 813 (TRIQTISQTV). Positions 828–845 (TTPTTSASLTPAPSVSSA) are enriched in low complexity. A compositionally biased stretch (basic residues) spans 989–998 (HYVKRSHRPR). The span at 1074 to 1095 (SLTESDSVSIESSSDPQNSSND) shows a compositional bias: low complexity.

Belongs to the TMC family. Expressed in a range of tissues including cerebrum, cerebellum, retina, cochlea, lung, liver and heart. Also expressed in the apical, medial and basal portions of the basillar papilla.

It is found in the membrane. Functionally, probable component of an ion channel. The protein is Transmembrane channel-like protein 3 of Gallus gallus (Chicken).